The sequence spans 76 residues: Kappa-scoloptoxin(15)-Ssd3a (76 aa).

Residues 1-23 (MEGKIIFICFLVVLLTLPELISS) form the signal peptide.

Post-translationally, contains 2 disulfide bonds. Expressed by the venom gland.

The protein localises to the secreted. Functionally, acts as a voltage-gated potassium channel inhibitor. In Scolopendra dehaani (Thai centipede), this protein is Kappa-scoloptoxin(15)-Ssd3a.